Consider the following 453-residue polypeptide: Folate transporter 1 (453 aa).

An N-linked (GlcNAc...) asparagine glycan is attached at Asn36. 5 helical membrane passes run 48 to 68 (PYWTYSYMLALIPMFILTDIL), 73 to 93 (IVMIEAIGLVATWALLVFGKG), 102 to 122 (VSFGVASAAEIAYYSYIYSIV), 136 to 156 (AAALMGKLVAFGLGQTLISTH), and 161 to 181 (LVLNQISLGAVCLVTIIAIFL). N-linked (GlcNAc...) asparagine glycosylation is present at Asn260. The next 5 membrane-spanning stretches (helical) occupy residues 276 to 296 (VANGVVEFVNTALGAFLSLFI), 306 to 326 (HGQMILFITSAIVAVLLYLCS), 331 to 351 (VLVAYSSYVVITSIYHMLITA), 368 to 388 (IFGCNTFVAVCLQSLLTLVVV), and 401 to 421 (FVIYSGYFALVASIFAFFFMI).

Belongs to the reduced folate carrier (RFC) transporter (TC 2.A.48) family. As to expression, highly expressed in pharynx and posterior part of the intestine. Expressed at lower levels in the body wall muscles, head muscles, and vulva muscles. Highly expressed in the intestine of the early larva, levels decrease in the later stages of development.

The protein resides in the membrane. Functionally, folate transporter. The polypeptide is Folate transporter 1 (folt-1) (Caenorhabditis elegans).